The sequence spans 180 residues: Pro-glucagon (180 aa).

The signal sequence occupies residues 1-20; sequence MKTIYFVAGLLIMLVQGSWQ. A disordered region spans residues 25 to 58; sequence DTEENPRSFPASQTEAHEDPDEMNEDKRHSQGTF. Residue Ser54 is modified to Phosphoserine. Residues 84–89 constitute a propeptide that is removed on maturation; sequence NRNNIA. A phosphoserine mark is found at Ser105 and Ser108. Arg127 is modified (arginine amide). Residues 131 to 145 constitute a propeptide that is removed on maturation; that stretch reads DFPEEVAIAEELGRR. Residues Ser150 and Ser152 each carry the phosphoserine modification.

It belongs to the glucagon family. In terms of processing, proglucagon is post-translationally processed in a tissue-specific manner in pancreatic A cells and intestinal L cells. In pancreatic A cells, the major bioactive hormone is glucagon cleaved by PCSK2/PC2. In the intestinal L cells PCSK1/PC1 liberates GLP-1, GLP-2, glicentin and oxyntomodulin. GLP-1 is further N-terminally truncated by post-translational processing in the intestinal L cells resulting in GLP-1(7-37) GLP-1-(7-36)amide. The C-terminal amidation is neither important for the metabolism of GLP-1 nor for its effects on the endocrine pancreas. In terms of tissue distribution, secreted in the A cells of the islets of Langerhans. Secreted in the A cells of the islets of Langerhans. Secreted from enteroendocrine L cells throughout the gastrointestinal tract. Also secreted in selected neurons in the brain. As to expression, secreted from enteroendocrine cells throughout the gastrointestinal tract. Also secreted in selected neurons in the brain. In terms of tissue distribution, secreted from enteroendocrine cells throughout the gastrointestinal tract.

The protein localises to the secreted. Functionally, plays a key role in glucose metabolism and homeostasis. Regulates blood glucose by increasing gluconeogenesis and decreasing glycolysis. A counterregulatory hormone of insulin, raises plasma glucose levels in response to insulin-induced hypoglycemia. Plays an important role in initiating and maintaining hyperglycemic conditions in diabetes. Its function is as follows. Potent stimulator of glucose-dependent insulin release. Also stimulates insulin release in response to IL6. Plays important roles on gastric motility and the suppression of plasma glucagon levels. May be involved in the suppression of satiety and stimulation of glucose disposal in peripheral tissues, independent of the actions of insulin. Has growth-promoting activities on intestinal epithelium. May also regulate the hypothalamic pituitary axis (HPA) via effects on LH, TSH, CRH, oxytocin, and vasopressin secretion. Increases islet mass through stimulation of islet neogenesis and pancreatic beta cell proliferation. Inhibits beta cell apoptosis. In terms of biological role, stimulates intestinal growth and up-regulates villus height in the small intestine, concomitant with increased crypt cell proliferation and decreased enterocyte apoptosis. The gastrointestinal tract, from the stomach to the colon is the principal target for GLP-2 action. Plays a key role in nutrient homeostasis, enhancing nutrient assimilation through enhanced gastrointestinal function, as well as increasing nutrient disposal. Stimulates intestinal glucose transport and decreases mucosal permeability. Significantly reduces food intake. Inhibits gastric emptying in humans. Suppression of gastric emptying may lead to increased gastric distension, which may contribute to satiety by causing a sensation of fullness. Functionally, may modulate gastric acid secretion and the gastro-pyloro-duodenal activity. May play an important role in intestinal mucosal growth in the early period of life. This is Pro-glucagon (Gcg) from Mus musculus (Mouse).